The following is a 252-amino-acid chain: Coenzyme F420:L-glutamate ligase (252 aa).

Residues 11 to 14 (MPLV), 45 to 46 (ET), and Lys50 each bind GTP. An a divalent metal cation-binding site is contributed by Asp115. Asn118 contacts GTP. A divalent metal cation contacts are provided by Asp156, Thr157, and Gln214. GTP is bound at residue 212 to 219 (MGQADEGV).

This sequence belongs to the CofE family. As to quaternary structure, homodimer. Requires Mg(2+) as cofactor. The cofactor is Mn(2+). K(+) serves as cofactor.

It catalyses the reaction oxidized coenzyme F420-0 + GTP + L-glutamate = oxidized coenzyme F420-1 + GDP + phosphate + H(+). The catalysed reaction is oxidized coenzyme F420-1 + GTP + L-glutamate = oxidized coenzyme F420-2 + GDP + phosphate + H(+). The protein operates within cofactor biosynthesis; coenzyme F420 biosynthesis. Its function is as follows. Catalyzes the GTP-dependent successive addition of two or more gamma-linked L-glutamates to the L-lactyl phosphodiester of 7,8-didemethyl-8-hydroxy-5-deazariboflavin (F420-0) to form coenzyme F420-0-glutamyl-glutamate (F420-2) or polyglutamated F420 derivatives. This Methanothermobacter thermautotrophicus (strain ATCC 29096 / DSM 1053 / JCM 10044 / NBRC 100330 / Delta H) (Methanobacterium thermoautotrophicum) protein is Coenzyme F420:L-glutamate ligase.